The primary structure comprises 212 residues: External core antigen (212 aa).

Residues 1–19 (MQLFHLCLIISCSCPTVQA) form the signal peptide. An HBEAG region spans residues 25 to 27 (GWL). Residues 172–212 (LPETTVVRRRGRSPRRRTPSPRRRRSKSPRRRRSQSRESQC) are disordered. Residues 178–205 (VRRRGRSPRRRTPSPRRRRSKSPRRRRS) show a composition bias toward basic residues. Residues 184–189 (SPRRRT) form a 1; half-length repeat. The 3 X 7 AA repeats of S-P-R-R-R-R-S stretch occupies residues 184–205 (SPRRRTPSPRRRRSKSPRRRRS). Positions 184–212 (SPRRRTPSPRRRRSKSPRRRRSQSRESQC) are excised as a propeptide. 2 tandem repeats follow at residues 191–197 (SPRRRRS) and 199–205 (SPRRRRS).

It belongs to the orthohepadnavirus precore antigen family. Homodimerizes. Post-translationally, phosphorylated. Cleaved by host furin.

Its subcellular location is the secreted. The protein resides in the host nucleus. In terms of biological role, may regulate immune response to the intracellular capsid in acting as a T-cell tolerogen, by having an immunoregulatory effect which prevents destruction of infected cells by cytotoxic T-cells. This immune regulation may predispose to chronicity during perinatal infections and prevent severe liver injury during adult infections. The protein is External core antigen of Hepatitis B virus genotype C subtype adr (isolate Japan/Nishioka/1983) (HBV-C).